The chain runs to 156 residues: MTTNPKPNKALKVKEESGENAPVLSDDELVSMSVRELNQHLRGLTKEEVIRLKQRRRTLKNRGYAASCRIKRVTQKEELERQRVELQQEVEKLARENSSMKLELDALRSKYEALQTFARTVARGPITPTKVATTSVITIVKSAEISSSSVPFSAAS.

A disordered region spans residues 1–21; it reads MTTNPKPNKALKVKEESGENA. A basic motif region spans residues 51 to 76; it reads RLKQRRRTLKNRGYAASCRIKRVTQK. The bZIP domain maps to 51 to 114; that stretch reads RLKQRRRTLK…DALRSKYEAL (64 aa). A leucine-zipper region spans residues 79 to 93; the sequence is LERQRVELQQEVEKL.

The protein belongs to the bZIP family. Maf subfamily. In terms of assembly, homodimer or heterodimer.

The protein localises to the nucleus. Functionally, since they lack a putative transactivation domain, the small Mafs behave as transcriptional repressors when they dimerize among themselves. However, they act as transcriptional activators by dimerizing with other (usually larger) basic-zipper proteins and recruiting them to specific DNA-binding sites. Small Maf proteins heterodimerize with Fos and may act as competitive repressors of the NF-E2 transcription factor. In Gallus gallus (Chicken), this protein is Transcription factor MafK (MAFK).